Reading from the N-terminus, the 448-residue chain is Deoxyguanosinetriphosphate triphosphohydrolase-like protein (448 aa).

The HD domain maps to 67–260; the sequence is RLTHSLEVSQ…MELADDIAYG (194 aa).

This sequence belongs to the dGTPase family. Type 2 subfamily.

The sequence is that of Deoxyguanosinetriphosphate triphosphohydrolase-like protein from Aliivibrio fischeri (strain ATCC 700601 / ES114) (Vibrio fischeri).